Reading from the N-terminus, the 528-residue chain is Cytochrome P450 monooxygenase polB (528 aa).

A helical membrane pass occupies residues 3–23 (SFFLVCPVAFLGFTICYLVYV). Heme is bound at residue Cys-473.

This sequence belongs to the cytochrome P450 family. Requires heme as cofactor.

It is found in the membrane. It carries out the reaction 4beta-carboxyl motiol + reduced [NADPH--hemoprotein reductase] + O2 = 2alpha-hydroxyl, 4beta-carboxyl motiol + oxidized [NADPH--hemoprotein reductase] + H2O + H(+). The enzyme catalyses 2-deoxypolytolypin + reduced [NADPH--hemoprotein reductase] + O2 = polytolypin + oxidized [NADPH--hemoprotein reductase] + H2O + H(+). It participates in secondary metabolite biosynthesis; terpenoid biosynthesis. Cytochrome P450 monooxygenase; part of the gene cluster that mediates the biosynthesis of antifungal fernane-type triterpenoid polytolypin. PolB acts as a hydroxylase and installs the 2-alpha-hydroxyl group in polytolypin. Within the pathway, the triterpene cyclase polA first catalyzes the cyclization of 2,3-oxidosqualene to motiol, polC converts the 4-alpha-methyl group of motiol to a carboxyl group, polB is responsible for appending a hydroxyl group at the 2-alpha position and polE is a dual functional P450, which can catalyze the formation of both the 1-beta-hydroxyl group and 10-beta-carboxyl group. This Polytolypa hystricis (strain UAMH7299) protein is Cytochrome P450 monooxygenase polB.